Reading from the N-terminus, the 438-residue chain is 23S rRNA (uracil(1939)-C(5))-methyltransferase RlmD (438 aa).

One can recognise a TRAM domain in the interval 10-69 (KASVNTKHLSVDVVRLDHNSAGIAFVDKKPVFIEGALPEEQAIIQFIEQKKQYSRAKLIK). [4Fe-4S] cluster contacts are provided by Cys-82, Cys-88, Cys-91, and Cys-169. S-adenosyl-L-methionine-binding residues include Gln-272, Phe-301, Asn-306, Glu-322, Asn-349, and Asp-370. The active-site Nucleophile is Cys-396.

This sequence belongs to the class I-like SAM-binding methyltransferase superfamily. RNA M5U methyltransferase family. RlmD subfamily.

It carries out the reaction uridine(1939) in 23S rRNA + S-adenosyl-L-methionine = 5-methyluridine(1939) in 23S rRNA + S-adenosyl-L-homocysteine + H(+). In terms of biological role, catalyzes the formation of 5-methyl-uridine at position 1939 (m5U1939) in 23S rRNA. The chain is 23S rRNA (uracil(1939)-C(5))-methyltransferase RlmD from Aliivibrio salmonicida (strain LFI1238) (Vibrio salmonicida (strain LFI1238)).